The following is a 359-amino-acid chain: N6-succino-2-amino-2'-deoxyadenylate synthase (359 aa).

The Proton acceptor role is filled by serine 23. ATP is bound by residues serine 23, threonine 24, glycine 25, lysine 26, and glycine 27. Position 23 (serine 23) interacts with dGMP. Serine 23 provides a ligand contact to Mg(2+). Asparagine 49 serves as a coordination point for dGMP. ATP is bound by residues glycine 51, histidine 52, and threonine 53. Glycine 51 provides a ligand contact to Mg(2+). DGMP-binding residues include serine 131, threonine 132, and arginine 146. Glutamine 190 lines the ATP pocket. A dGMP-binding site is contributed by threonine 205. Threonine 274 serves as a coordination point for Mg(2+). Positions 274, 275, and 280 each coordinate L-aspartate. Asparagine 305 and glutamine 308 together coordinate ATP.

It belongs to the Caudovirales PurZ family. Mg(2+) serves as cofactor.

It carries out the reaction dGMP + L-aspartate + ATP = (2S)-2-amino-2'-deoxyadenylo-succinate + ADP + phosphate + 2 H(+). It participates in purine metabolism. Involved in the synthesis of the atypical nucleotide dZTP (2-amino-2'-deoxyadenosine-5'-triphosphate). Catalyzes the condensation of aspartate with deoxyguanylate into dSMP (N6-succino-2-amino-2'-deoxyadenylate), which undergoes defumarylation and phosphorylation respectively by host PurB and guanylate/nucleoside diphosphate kinases to give dZTP. dZTP is integrated into the viral genome instead of adenine by the viral DNA polymerase. This Z-base probably completely replaces adenosine and forms a triple bond to the opposite T-base. The resulting non-standard viral DNA is called Z-genome. The chemically modified DNA is probably harder for the host bacteria to digest with nucleases or restriction enzymes. This chain is N6-succino-2-amino-2'-deoxyadenylate synthase, found in Cyanophage S-2L (Cyanobacteria phage S-2L).